A 192-amino-acid polypeptide reads, in one-letter code: Threonylcarbamoyl-AMP synthase (192 aa).

One can recognise a YrdC-like domain in the interval 5–192; the sequence is TTSVAEAAHC…DATTGRVIRD (188 aa).

Belongs to the SUA5 family. TsaC subfamily.

The protein resides in the cytoplasm. The enzyme catalyses L-threonine + hydrogencarbonate + ATP = L-threonylcarbamoyladenylate + diphosphate + H2O. Its function is as follows. Required for the formation of a threonylcarbamoyl group on adenosine at position 37 (t(6)A37) in tRNAs that read codons beginning with adenine. Catalyzes the conversion of L-threonine, HCO(3)(-)/CO(2) and ATP to give threonylcarbamoyl-AMP (TC-AMP) as the acyladenylate intermediate, with the release of diphosphate. The sequence is that of Threonylcarbamoyl-AMP synthase from Acinetobacter baylyi (strain ATCC 33305 / BD413 / ADP1).